The primary structure comprises 193 residues: Putative F-box protein At1g31072 (193 aa).

Positions 4-53 constitute an F-box domain; the sequence is EKTLDSIPIDVFLDIFSRLPAKSVGRSCCVSNRWASILGSQDFKELFLTM.

In Arabidopsis thaliana (Mouse-ear cress), this protein is Putative F-box protein At1g31072.